A 502-amino-acid polypeptide reads, in one-letter code: Glycerol kinase (502 aa).

Residue Thr14 coordinates ADP. Thr14, Thr15, and Ser16 together coordinate ATP. Position 14 (Thr14) interacts with sn-glycerol 3-phosphate. Arg18 lines the ADP pocket. Residues Arg84, Glu85, Tyr136, and Asp246 each contribute to the sn-glycerol 3-phosphate site. 5 residues coordinate glycerol: Arg84, Glu85, Tyr136, Asp246, and Gln247. Residues Thr268 and Gly311 each coordinate ADP. Positions 268, 311, 315, and 412 each coordinate ATP. ADP-binding residues include Gly412 and Asn416.

Belongs to the FGGY kinase family. Homotetramer and homodimer (in equilibrium). Heterodimer with EIIA-Glc. Binds 1 zinc ion per glycerol kinase EIIA-Glc dimer. The zinc ion is important for dimerization.

It catalyses the reaction glycerol + ATP = sn-glycerol 3-phosphate + ADP + H(+). Its pathway is polyol metabolism; glycerol degradation via glycerol kinase pathway; sn-glycerol 3-phosphate from glycerol: step 1/1. Activity of this regulatory enzyme is affected by several metabolites. Allosterically and non-competitively inhibited by fructose 1,6-bisphosphate (FBP) and unphosphorylated phosphocarrier protein EIIA-Glc (III-Glc), an integral component of the bacterial phosphotransferase (PTS) system. Functionally, key enzyme in the regulation of glycerol uptake and metabolism. Catalyzes the phosphorylation of glycerol to yield sn-glycerol 3-phosphate. In Enterobacter sp. (strain 638), this protein is Glycerol kinase.